The sequence spans 446 residues: MQIAILVTTVTLHFNQYECDSLADNQVMPCEPIIIERNITEIIYLTNTTIEKEICPKLMEYRNWSRPQCKITGFAPFSKDNSIRLSAGGDIWVTREPYVSCDPGKCYQFALGQGTTLDNKHSNDTIHDRIPHRTLLMNELGVPFHLGTRQVCIAWSSSSCHDGKAWLHVCVTGDDKNATASFIYDGRLVDSMGSWSQNILRTQESECVCINGTCTVVMTDGSASGRADTRILFIEEGKIVHISPLSGSAQHVEECSCYPRYPSVRCICRDNWKGSNRPIVDINIKDYSIDSRYVCSGLVGDTPRNNDRSSSSDCKNPNNDKGNHGVKGWAFDDGNDVWMGRTISKDSRSGYETFKVIDGWSTPNSKSQINRQVIVDRDNRSGYSGIFSVESKGCINRCFYVELIRGRKQETRVWWTSSSIVVFCGTSGTYGKGSWPDGANINFMPI.

The segment at 13–65 (HFNQYECDSLADNQVMPCEPIIIERNITEIIYLTNTTIEKEICPKLMEYRNWS) is hypervariable stalk region. N-linked (GlcNAc...) asparagine; by host glycosylation is found at Asn-38, Asn-47, and Asn-63. The interval 68-446 (QCKITGFAPF…DGANINFMPI (379 aa)) is head of neuraminidase. Intrachain disulfides connect Cys-69–Cys-394, Cys-101–Cys-106, Cys-160–Cys-207, Cys-209–Cys-214, Cys-255–Cys-268, Cys-257–Cys-266, Cys-295–Cys-314, and Cys-398–Cys-424. Arg-95 is a binding site for substrate. The N-linked (GlcNAc...) asparagine; by host glycan is linked to Asn-123. The active-site Proton donor/acceptor is Asp-128. Position 129 (Arg-129) interacts with substrate. N-linked (GlcNAc...) asparagine; by host glycosylation is found at Asn-177 and Asn-211. Substrate is bound at residue 253 to 254 (EE). Arg-269 serves as a coordination point for substrate. Positions 270, 274, and 301 each coordinate Ca(2+). The interval 304–327 (RNNDRSSSSDCKNPNNDKGNHGVK) is disordered. The segment covering 308–320 (RSSSSDCKNPNND) has biased composition (polar residues). Arg-348 provides a ligand contact to substrate. Asn-379 carries an N-linked (GlcNAc...) asparagine; by host glycan. Tyr-383 serves as the catalytic Nucleophile.

The protein belongs to the glycosyl hydrolase 34 family. In terms of assembly, homotetramer. Requires Ca(2+) as cofactor. In terms of processing, N-glycosylated.

Its subcellular location is the virion membrane. It is found in the host apical cell membrane. It catalyses the reaction Hydrolysis of alpha-(2-&gt;3)-, alpha-(2-&gt;6)-, alpha-(2-&gt;8)- glycosidic linkages of terminal sialic acid residues in oligosaccharides, glycoproteins, glycolipids, colominic acid and synthetic substrates.. With respect to regulation, inhibited by the neuraminidase inhibitors zanamivir (Relenza) and oseltamivir (Tamiflu). These drugs interfere with the release of progeny virus from infected cells and are effective against all influenza strains. Resistance to neuraminidase inhibitors is quite rare. Its function is as follows. Catalyzes the removal of terminal sialic acid residues from viral and cellular glycoconjugates. Cleaves off the terminal sialic acids on the glycosylated HA during virus budding to facilitate virus release. Additionally helps virus spread through the circulation by further removing sialic acids from the cell surface. These cleavages prevent self-aggregation and ensure the efficient spread of the progeny virus from cell to cell. Otherwise, infection would be limited to one round of replication. Described as a receptor-destroying enzyme because it cleaves a terminal sialic acid from the cellular receptors. May facilitate viral invasion of the upper airways by cleaving the sialic acid moieties on the mucin of the airway epithelial cells. Likely to plays a role in the budding process through its association with lipid rafts during intracellular transport. May additionally display a raft-association independent effect on budding. Plays a role in the determination of host range restriction on replication and virulence. Sialidase activity in late endosome/lysosome traffic seems to enhance virus replication. This Influenza A virus (strain A/Swine/Hong Kong/127/1982 H3N2) protein is Neuraminidase.